The following is an 86-amino-acid chain: RNA-binding protein Hfq (86 aa).

Residues 9 to 68 enclose the Sm domain; that stretch reads DPYLNTLRKEKVPVSIYLVNGIKLQGSIESFDQFVVLLKNTVSQMVYKHAISTVVPARPV. The interval 67 to 86 is disordered; that stretch reads PVRLPSPTDGEHGDSEPGNA. Residues 75–86 show a composition bias toward basic and acidic residues; it reads DGEHGDSEPGNA.

Belongs to the Hfq family. As to quaternary structure, homohexamer.

RNA chaperone that binds small regulatory RNA (sRNAs) and mRNAs to facilitate mRNA translational regulation in response to envelope stress, environmental stress and changes in metabolite concentrations. Also binds with high specificity to tRNAs. In Pseudomonas putida (strain GB-1), this protein is RNA-binding protein Hfq.